Reading from the N-terminus, the 235-residue chain is Purine nucleoside phosphorylase DeoD-type (235 aa).

His4 provides a ligand contact to a purine D-ribonucleoside. Phosphate-binding positions include Gly20, Arg24, Arg43, and 87–90 (RVGT). A purine D-ribonucleoside contacts are provided by residues 179–181 (EME) and 203–204 (SD). Asp204 (proton donor) is an active-site residue.

It belongs to the PNP/UDP phosphorylase family. As to quaternary structure, homohexamer; trimer of homodimers.

It catalyses the reaction a purine D-ribonucleoside + phosphate = a purine nucleobase + alpha-D-ribose 1-phosphate. The catalysed reaction is a purine 2'-deoxy-D-ribonucleoside + phosphate = a purine nucleobase + 2-deoxy-alpha-D-ribose 1-phosphate. Catalyzes the reversible phosphorolytic breakdown of the N-glycosidic bond in the beta-(deoxy)ribonucleoside molecules, with the formation of the corresponding free purine bases and pentose-1-phosphate. This is Purine nucleoside phosphorylase DeoD-type from Clostridium perfringens (strain SM101 / Type A).